A 280-amino-acid polypeptide reads, in one-letter code: tRNase Z TRZ1 (280 aa).

This sequence belongs to the RNase Z family. In terms of assembly, homodimer. It depends on Zn(2+) as a cofactor. The cofactor is Ca(2+). Requires Mn(2+) as cofactor. Mg(2+) serves as cofactor.

It localises to the cytoplasm. It carries out the reaction Endonucleolytic cleavage of RNA, removing extra 3' nucleotides from tRNA precursor, generating 3' termini of tRNAs. A 3'-hydroxy group is left at the tRNA terminus and a 5'-phosphoryl group is left at the trailer molecule.. Functionally, zinc phosphodiesterase, which displays tRNA 3'-processing endonuclease activity. Involved in tRNA maturation, by removing a 3'-trailer from precursor tRNA. Can use bis-(p-nitophenyl) phosphate (bpNPP) as substrate. Involved in the processing of small nucleolar RNAs (snoRNAs). This chain is tRNase Z TRZ1, found in Arabidopsis thaliana (Mouse-ear cress).